Reading from the N-terminus, the 425-residue chain is Dihydroorotase (425 aa).

Zn(2+) contacts are provided by His-56 and His-58. Substrate contacts are provided by residues 58–60 and Asn-90; that span reads HYR. Positions 148, 175, and 228 each coordinate Zn(2+). Asn-274 contacts substrate. Residue Asp-301 participates in Zn(2+) binding. Asp-301 is a catalytic residue. Residues His-305 and 319–320 contribute to the substrate site; that span reads FG.

This sequence belongs to the metallo-dependent hydrolases superfamily. DHOase family. Class I DHOase subfamily. Zn(2+) serves as cofactor.

The catalysed reaction is (S)-dihydroorotate + H2O = N-carbamoyl-L-aspartate + H(+). The protein operates within pyrimidine metabolism; UMP biosynthesis via de novo pathway; (S)-dihydroorotate from bicarbonate: step 3/3. Its function is as follows. Catalyzes the reversible cyclization of carbamoyl aspartate to dihydroorotate. The sequence is that of Dihydroorotase from Lactobacillus acidophilus (strain ATCC 700396 / NCK56 / N2 / NCFM).